Reading from the N-terminus, the 212-residue chain is Large ribosomal subunit protein uL3 (212 aa).

Q153 carries the N5-methylglutamine modification.

The protein belongs to the universal ribosomal protein uL3 family. Part of the 50S ribosomal subunit. Forms a cluster with proteins L14 and L19. Methylated by PrmB.

Its function is as follows. One of the primary rRNA binding proteins, it binds directly near the 3'-end of the 23S rRNA, where it nucleates assembly of the 50S subunit. The sequence is that of Large ribosomal subunit protein uL3 from Shewanella halifaxensis (strain HAW-EB4).